The sequence spans 1085 residues: MTIMAQVLHMDSSFPGKINPPVPPSLHAKDQEAPYSVETPYGYRLDLDFLKYVNDIEKGNTIKKVPVQRRPRYGSLPRGYGYTGSWWTSTESLCSNASMDSRHSSYSYCAPGFHTSQRPNFSTARVEKTLMDARRKLEEEKDGRRFSNLGSMHSSMAGSNTSLSSAHSFNRAQGGGSYTPMSSGLSTPVSPTPAHLQHVREQMAVALRKIRELEEQVKTIPVLQVKISVLQEEKRQLSVQLKSQKFLGHTLGFNRSRPRGELYIDIPEEEAGNGAGAANKATGSLSPTTPGSLQDSGCEIEETVIVAGARPGAKREVRTVGVGPEAEERGYRQVGVGVREQDLGLLPETEALKTKVGLLEVQLRKTMQELQSAQQQVEAAQKERQTVCPQVDHAVRATSLGWQDQQGQAGAGLHTVVSFTKQPHQQRTVGIQVYTLEQPTVVGVGTLLRAQGCTHPAQLEASHRRYGESPAAGDSPHEFPIAISSKQVREVLRSEVSKSVPVTNQATPMETKCNQVTAVCQRLKEGEINQQPAEEAIQVDPANPASPQSNLRSIMKRKADGEPGSPYTKKNLQFLGVNGGYESTSSEESSSESSEDESDASEYHEATEKLPESATPQSLVSSCIPQLASETPATQTAQHSTAQIPTNHTPAAQTTSQSHTTDATTQQHVTQSPAAEADVQHCVSQSSVTTTPPPEGDVQCVFQGCNPPSTATSLEQNSVQLSSATQQSKATDSNVQPDLAQTDVSDFAAQQTTTQTQFTSAKPQQEASQSKTADLTAQKGATHSTDGSAKQDIAISSTTKPAADTATPPTNKQTDSLELSGGLMSALHILQKALSEPNAFSHQDARTAYTSVLQEWLRVSCHKAADTAVVKAHMDAFASISPQLLEFVINMADGNGNTALHYTVSHSNFPVVKLLLDTGLCNADKQNKAGYTAIMLTALAAFSSDSDLQTVLQLLRTGDVNAKASQAGQTALMLAVSHGRGDMVKALLACGAQVNLRDDDGSTALMCACEHGHVDIVRQLLSVPGCDATLTDNDGSTALSIALEASQNDIAVLLYAHLNFAKPPSPVSPKSPILGSSPPSSSELK.

A compositionally biased stretch (basic and acidic residues) spans 136-145 (KLEEEKDGRR). The segment at 136 to 192 (KLEEEKDGRRFSNLGSMHSSMAGSNTSLSSAHSFNRAQGGGSYTPMSSGLSTPVSPT) is disordered. Composition is skewed to polar residues over residues 148-171 (NLGS…SFNR) and 179-189 (TPMSSGLSTPV). The stretch at 196 to 216 (LQHVREQMAVALRKIRELEEQ) forms a coiled coil. The disordered stretch occupies residues 273 to 295 (NGAGAANKATGSLSPTTPGSLQD). Residues 281 to 295 (ATGSLSPTTPGSLQD) are compositionally biased toward polar residues. A coiled-coil region spans residues 356–383 (VGLLEVQLRKTMQELQSAQQQVEAAQKE). Disordered regions lie at residues 557–736 (RKAD…SNVQ), 752–791 (TTTQ…SAKQ), and 798–817 (TTKP…TDSL). Residues 589 to 600 (SSSESSEDESDA) show a composition bias toward acidic residues. A compositionally biased stretch (basic and acidic residues) spans 601-611 (SEYHEATEKLP). Polar residues predominate over residues 614 to 648 (ATPQSLVSSCIPQLASETPATQTAQHSTAQIPTNH). Residues 649–668 (TPAAQTTSQSHTTDATTQQH) are compositionally biased toward low complexity. 2 stretches are compositionally biased toward polar residues: residues 706 to 736 (NPPS…SNVQ) and 760 to 788 (SAKP…TDGS). The span at 798–810 (TTKPAADTATPPT) shows a compositional bias: low complexity. ANK repeat units lie at residues 895 to 925 (NGNT…NADK), 929 to 962 (AGYT…DVNA), 967 to 996 (AGQT…QVNL), 1000 to 1030 (DGST…DATL), and 1034 to 1063 (DGST…FAKP). A disordered region spans residues 1064 to 1085 (PSPVSPKSPILGSSPPSSSELK). Low complexity predominate over residues 1070–1085 (KSPILGSSPPSSSELK).

It localises to the cytoplasm. It is found in the mitochondrion. Functionally, may be involved in different biological processes including transcription and apoptosis by sequestering specific proteins outside of the nucleus. Involved in actin stress fibers formation probably through its interaction with ARHGDIA and the regulation of the Rho signaling pathway. May thereby play a role in cell adhesion and migration, regulating for instance podocytes migration during development of the kidney. This Danio rerio (Zebrafish) protein is KN motif and ankyrin repeat domain-containing protein 2 (kank2).